Reading from the N-terminus, the 334-residue chain is Anthranilate phosphoribosyltransferase (334 aa).

5-phospho-alpha-D-ribose 1-diphosphate is bound by residues Gly81, 84-85 (GD), Thr89, 91-94 (NIST), 109-117 (KHGNRSVSS), and Ala121. Gly81 contacts anthranilate. Mg(2+) is bound at residue Ser93. Asn112 contacts anthranilate. Arg167 provides a ligand contact to anthranilate. Mg(2+) contacts are provided by Asp225 and Glu226.

The protein belongs to the anthranilate phosphoribosyltransferase family. As to quaternary structure, homodimer. The cofactor is Mg(2+).

It carries out the reaction N-(5-phospho-beta-D-ribosyl)anthranilate + diphosphate = 5-phospho-alpha-D-ribose 1-diphosphate + anthranilate. Its pathway is amino-acid biosynthesis; L-tryptophan biosynthesis; L-tryptophan from chorismate: step 2/5. Functionally, catalyzes the transfer of the phosphoribosyl group of 5-phosphorylribose-1-pyrophosphate (PRPP) to anthranilate to yield N-(5'-phosphoribosyl)-anthranilate (PRA). The polypeptide is Anthranilate phosphoribosyltransferase (Histophilus somni (strain 2336) (Haemophilus somnus)).